Consider the following 673-residue polypeptide: Zinc finger protein 16 (673 aa).

Residues 1–10 show a composition bias toward basic and acidic residues; the sequence is MPSLRTRREE. A disordered region spans residues 1–42; that stretch reads MPSLRTRREEAEMELSAPGPSPWTPAPQARVSDAPAVTHPGS. The interval 62 to 210 is necessary for transcription activation; sequence YQQPDCDTRT…GVPTAESPLI (149 aa). The segment at 209–231 adopts a C2H2-type 1; degenerate zinc-finger fold; that stretch reads LICNECGKTFRGNPDLIQRQIVH. A C2H2-type 2; degenerate zinc finger spans residues 237-259; that stretch reads FMCDDCGKTFSQNSVLKNRHXSH. A Glycyl lysine isopeptide (Lys-Gly) (interchain with G-Cter in SUMO2) cross-link involves residue Lys253. 7 C2H2-type zinc fingers span residues 284–306, 312–334, 340–362, 368–390, 396–418, 424–446, and 452–474; these read YTCTECGKAFSQNSSLKKHQKSH, YECNECGKAFRRSSNLIQHQRIH, YVCSECGKAFRRSSNLIKHHRTH, FECGECGKAFSQSAHLRKHQRVH, YECNDCGKPFSRVSNLIKHHRVH, YKCSDCGKAFSQSSSLIQHRRIH, and HVCNVCGKAFSYSSVLRKHQIIH. The segment at 332 to 364 is required for nuclear localization; it reads RIHSGEKPYVCSECGKAFRRSSNLIKHHRTHTG. Positions 464-494 are required for nuclear localization; it reads SSVLRKHQIIHTGEKPYRCSVCGKAFSHSSA. The residue at position 478 (Lys478) is an N6-acetyllysine. 7 C2H2-type zinc fingers span residues 480 to 502, 508 to 530, 536 to 558, 564 to 586, 592 to 614, 620 to 642, and 648 to 670; these read YRCSVCGKAFSHSSALIQHQGVH, YACHECGKTFGRSSNLILHQRVH, YECTECGKTFSQSSTLIQHQRIH, HECNQCGKAFNRSSNLIHHQKVH, YTCVECGKGFSQSSHLIQHQIIH, YKCSECGKAFSQRSVLIQHQRIH, and YDCAACGKAFSQRSKLIKHQLIH.

The protein belongs to the krueppel C2H2-type zinc-finger protein family. In terms of assembly, interacts with INCA1; the interaction inhibits INCA1 activity and induces the cell cycle process.

The protein localises to the nucleus. Acts as a transcriptional activator. Promotes cell proliferation by facilitating the cell cycle phase transition from the S to G2/M phase. Involved in both the hemin- and phorbol myristate acetate (PMA)-induced erythroid and megakaryocytic differentiation, respectively. Also plays a role as an inhibitor of cell apoptosis. This Pan paniscus (Pygmy chimpanzee) protein is Zinc finger protein 16 (ZNF16).